A 53-amino-acid chain; its full sequence is ATP synthase protein 8 (53 aa).

The chain crosses the membrane as a helical span at residues 4–24 (MAPISWLLLFIIFSITFILFC).

It belongs to the ATPase protein 8 family. In terms of assembly, F-type ATPases have 2 components, CF(1) - the catalytic core - and CF(0) - the membrane proton channel.

The protein localises to the mitochondrion membrane. Mitochondrial membrane ATP synthase (F(1)F(0) ATP synthase or Complex V) produces ATP from ADP in the presence of a proton gradient across the membrane which is generated by electron transport complexes of the respiratory chain. F-type ATPases consist of two structural domains, F(1) - containing the extramembraneous catalytic core and F(0) - containing the membrane proton channel, linked together by a central stalk and a peripheral stalk. During catalysis, ATP synthesis in the catalytic domain of F(1) is coupled via a rotary mechanism of the central stalk subunits to proton translocation. Part of the complex F(0) domain. Minor subunit located with subunit a in the membrane. The polypeptide is ATP synthase protein 8 (mt:ATPase8) (Drosophila sechellia (Fruit fly)).